The primary structure comprises 118 residues: U-scoloptoxin(05)-Cw1a (118 aa).

Positions 1-22 (MNPLNLSTFIVFTLFAASATTA) are cleaved as a signal peptide.

The protein belongs to the scoloptoxin-05 family. Post-translationally, contains 5 disulfide bonds. Expressed by the venom gland.

The protein resides in the secreted. The protein is U-scoloptoxin(05)-Cw1a of Cormocephalus westwoodi (Westwood's green centipede).